We begin with the raw amino-acid sequence, 362 residues long: 3-dehydroquinate synthase (362 aa).

NAD(+) is bound by residues 71–76 (DGEQYK), 105–109 (GVIGD), 129–130 (TT), K142, K151, and 169–172 (CLKT). Zn(2+)-binding residues include E184, H247, and H264.

This sequence belongs to the sugar phosphate cyclases superfamily. Dehydroquinate synthase family. Requires Co(2+) as cofactor. It depends on Zn(2+) as a cofactor. The cofactor is NAD(+).

Its subcellular location is the cytoplasm. The enzyme catalyses 7-phospho-2-dehydro-3-deoxy-D-arabino-heptonate = 3-dehydroquinate + phosphate. The protein operates within metabolic intermediate biosynthesis; chorismate biosynthesis; chorismate from D-erythrose 4-phosphate and phosphoenolpyruvate: step 2/7. In terms of biological role, catalyzes the conversion of 3-deoxy-D-arabino-heptulosonate 7-phosphate (DAHP) to dehydroquinate (DHQ). The chain is 3-dehydroquinate synthase from Salmonella enteritidis PT4 (strain P125109).